The following is a 797-amino-acid chain: MAMGPPPEDGTVAVVVRVRPPTPSERDGAAHPVLHVVDQHILVFDPEEPGGPPGAALPPRGPKHRGKDLKFVFDRVFGEGATQEEVFQHTTREVLDGVLNGYNCSVFAYGATGAGKTYTMLGSEQSPGIMYLTMAELYRRIEARRDEKSCEVLVSYQEVYNEQIHDLLEPKGPLAIREDPEKGVVVQGLSFHQPKSAEQLLEMLANGNKNRTQHPTDANATSSRSHAVFQIYVKQQDRVVGLSQDLQVAKMSLIDLAGSERASVTNTKGERLREGANINRSLLALINVINALADAKSKKTHIPYRDSKLTRLLKDSIGGNCRTIMIAAVSPSSLAYEDTYNTLKYANRAKEIKLSLKSNVLSLDCHISKYATICEQLKTEVADLQAKLRAYEDAARDAGKQIPALLPPPRMEEAVPESCSAPNVCRESDGEQQELGAGQDAQLGGEEEVLEEMPPSSPSPTQQTDLQLGMKKPNRLPQRLSRSHTEMLMATILSVAQKQYSLLKAANLLTPDMVSEFEELQLLVQKEAAVSPQPTDTSGAPPALRTQRGCDASPSTLSAEPSVPTTRAALRRLQQLTALSSPKLVAKKRRRSEMSNTSRLETPHSLNTRAKRQRKSSPLSAGGEVEAQRSPHTPCLKEPQSPPLLPCCTPKICPLTVTKRRAPLMTSAAQNCCTPTVCDLNVTYSLSEDVAKPGALSLPRFPGWENAPCALKKQEGPFVPRASIPVFSMKGSSIPKPSSISKGSVQKRRGAVSNASRSLGGIQSHITSSSSRRSAQPQSIPEHPPPGLTWKGRSGPR.

Positions 11 to 352 constitute a Kinesin motor domain; sequence TVAVVVRVRP…LKYANRAKEI (342 aa). Residue 110 to 117 coordinates ATP; that stretch reads GATGAGKT. Residues 367–402 are a coiled coil; it reads ISKYATICEQLKTEVADLQAKLRAYEDAARDAGKQI. Disordered regions lie at residues 412-476, 528-564, 579-640, and 730-797; these read EEAV…PNRL, AAVS…PSVP, LSSP…KEPQ, and KGSS…SGPR. The segment covering 594 to 608 has biased composition (polar residues); that stretch reads MSNTSRLETPHSLNT. The segment covering 731 to 744 has biased composition (low complexity); that stretch reads GSSIPKPSSISKGS.

The protein belongs to the TRAFAC class myosin-kinesin ATPase superfamily. Kinesin family.

It is found in the nucleus. It localises to the cytoplasm. Its subcellular location is the cytoskeleton. Functionally, may play an important role in microtubule plus-end depolymerizing activity in mitotic cells. The chain is Kinesin-like protein KIF18B (KIF18B) from Gallus gallus (Chicken).